Here is an 84-residue protein sequence, read N- to C-terminus: Small ribosomal subunit protein uS17 (84 aa).

The protein belongs to the universal ribosomal protein uS17 family. In terms of assembly, part of the 30S ribosomal subunit.

One of the primary rRNA binding proteins, it binds specifically to the 5'-end of 16S ribosomal RNA. The polypeptide is Small ribosomal subunit protein uS17 (Karelsulcia muelleri (strain GWSS) (Sulcia muelleri)).